The chain runs to 494 residues: Protein DETOXIFICATION 22 (494 aa).

Transmembrane regions (helical) follow at residues 40–60, 78–98, 123–143, 159–179, 188–208, 217–237, 268–288, 299–319, 340–360, 384–404, 416–436, and 441–461; these read LWVV…VSLV, ITFT…ASAL, IVLT…GPIL, IALW…CQIF, IIAY…WLLV, GAMT…LLYV, GGMV…TGNL, AICI…LAAV, IVAV…FLFL, LLAF…VAVG, LACY…VVGL, and VWIG…IMTL.

The protein belongs to the multi antimicrobial extrusion (MATE) (TC 2.A.66.1) family.

Its subcellular location is the membrane. The protein is Protein DETOXIFICATION 22 of Arabidopsis thaliana (Mouse-ear cress).